Reading from the N-terminus, the 838-residue chain is Periostin (838 aa).

An N-terminal signal peptide occupies residues 1-23 (MVPLLPLYALLLLFLCDINPANA). In terms of domain architecture, EMI spans 42–96 (GPNVCALQQILGTKKKYFSSCKNWYQGAICGKKTTVLYECCPGYMRMEGMKGCPA). 5 disulfide bridges follow: cysteine 46–cysteine 82, cysteine 71–cysteine 335, cysteine 81–cysteine 94, cysteine 210–cysteine 313, and cysteine 469–cysteine 474. Cysteine 62 is modified (S-cysteinyl cysteine). 4 consecutive FAS1 domains span residues 99 to 232 (PIDH…DRVL), 236 to 367 (GTSI…DEVL), 370 to 494 (DSAK…REII), and 498 to 630 (EKSL…DKLL). Asparagine 601 carries N-linked (GlcNAc...) asparagine glycosylation. The tract at residues 811-838 (QGDTPAKKIPANKRVQGPRRRSREGRSQ) is disordered. The span at 826 to 838 (QGPRRRSREGRSQ) shows a compositional bias: basic residues.

In terms of assembly, homodimer. Interacts with BMP1 and fibronectin. Post-translationally, gamma-carboxylation is controversial. Gamma-carboxyglutamated; gamma-carboxyglutamate residues are formed by vitamin K dependent carboxylation; these residues may be required for binding to calcium. According to a more recent report in human, does not contain vitamin K-dependent gamma-carboxyglutamate residues. As to expression, preferentially expressed in periosteum and periodontal ligament. Also expressed in the developing and adult heart.

The protein localises to the golgi apparatus. It localises to the secreted. Its subcellular location is the extracellular space. It is found in the extracellular matrix. Induces cell attachment and spreading and plays a role in cell adhesion. Enhances incorporation of BMP1 in the fibronectin matrix of connective tissues, and subsequent proteolytic activation of lysyl oxidase LOX. This Mus musculus (Mouse) protein is Periostin (Postn).